The chain runs to 77 residues: Protein UL148C (77 aa).

Transmembrane regions (helical) follow at residues 10 to 30 (VLYLLALVVWVEMFCLVAVAV) and 35 to 55 (IAWALLLRMLVVGLMVEVGAA).

Its subcellular location is the host membrane. This Homo sapiens (Human) protein is Protein UL148C (UL148C).